The following is a 342-amino-acid chain: Holliday junction branch migration complex subunit RuvB (342 aa).

Residues 1 to 179 are large ATPase domain (RuvB-L); that stretch reads MTNILSPEKS…FGIPMRLNFY (179 aa). Residues Ile-18, Arg-19, Gly-60, Lys-63, Thr-64, Thr-65, 126–128, Arg-169, Tyr-179, and Arg-216 contribute to the ATP site; that span reads EDF. Position 64 (Thr-64) interacts with Mg(2+). A small ATPAse domain (RuvB-S) region spans residues 180 to 250; that stretch reads NTEELKQVLN…ICDFGLKRLT (71 aa). The interval 253-342 is head domain (RuvB-H); the sequence is SIGLDSNDYR…HQFNILNENE (90 aa). The DNA site is built by Arg-289, Arg-308, and Arg-313.

It belongs to the RuvB family. As to quaternary structure, homohexamer. Forms an RuvA(8)-RuvB(12)-Holliday junction (HJ) complex. HJ DNA is sandwiched between 2 RuvA tetramers; dsDNA enters through RuvA and exits via RuvB. An RuvB hexamer assembles on each DNA strand where it exits the tetramer. Each RuvB hexamer is contacted by two RuvA subunits (via domain III) on 2 adjacent RuvB subunits; this complex drives branch migration. In the full resolvosome a probable DNA-RuvA(4)-RuvB(12)-RuvC(2) complex forms which resolves the HJ.

The protein resides in the cytoplasm. The enzyme catalyses ATP + H2O = ADP + phosphate + H(+). In terms of biological role, the RuvA-RuvB-RuvC complex processes Holliday junction (HJ) DNA during genetic recombination and DNA repair, while the RuvA-RuvB complex plays an important role in the rescue of blocked DNA replication forks via replication fork reversal (RFR). RuvA specifically binds to HJ cruciform DNA, conferring on it an open structure. The RuvB hexamer acts as an ATP-dependent pump, pulling dsDNA into and through the RuvAB complex. RuvB forms 2 homohexamers on either side of HJ DNA bound by 1 or 2 RuvA tetramers; 4 subunits per hexamer contact DNA at a time. Coordinated motions by a converter formed by DNA-disengaged RuvB subunits stimulates ATP hydrolysis and nucleotide exchange. Immobilization of the converter enables RuvB to convert the ATP-contained energy into a lever motion, pulling 2 nucleotides of DNA out of the RuvA tetramer per ATP hydrolyzed, thus driving DNA branch migration. The RuvB motors rotate together with the DNA substrate, which together with the progressing nucleotide cycle form the mechanistic basis for DNA recombination by continuous HJ branch migration. Branch migration allows RuvC to scan DNA until it finds its consensus sequence, where it cleaves and resolves cruciform DNA. This chain is Holliday junction branch migration complex subunit RuvB, found in Rickettsia typhi (strain ATCC VR-144 / Wilmington).